Reading from the N-terminus, the 275-residue chain is Trans-aconitate 2-methyltransferase (275 aa).

Belongs to the methyltransferase superfamily. Tam family.

It localises to the cytoplasm. The catalysed reaction is trans-aconitate + S-adenosyl-L-methionine = (E)-3-(methoxycarbonyl)pent-2-enedioate + S-adenosyl-L-homocysteine. Its function is as follows. Catalyzes the S-adenosylmethionine monomethyl esterification of trans-aconitate. This chain is Trans-aconitate 2-methyltransferase, found in Pseudomonas paraeruginosa (strain DSM 24068 / PA7) (Pseudomonas aeruginosa (strain PA7)).